A 375-amino-acid chain; its full sequence is MKICDNISEINDDQDLVFIDIEATDSKGEQRIIQFSGYRLNIKKNKIFNFNKKFNPEQEINSRIKTLLNFNKNFNNIEQMPKLDKQAAREIYCFVKNAIVITFTDFDIKKMHELFTYYNFDFEKIVYFDVYKFFEKKLQTKSVPSLFSLGILSGIKINFFKLHNALYDAFILKEIFMCIRHKTNEELYEMYRYYEFLPKIISSSYFVTNEQEKNRGIIKKEIKYVMYIKEFDFSNKFNLDFVVYKKDHHFYSKPIYDSSLELQTISSLTSKSNFMKVKLANIFFNYLSKSAVFSIKKLSIKQSEKFLKFYKTQTNKRKVIKVLNLNLKKEIKPENFVIKAQIICEILFKNPIIHHFVHEYLKIFQNIFSQEEKDN.

This is an uncharacterized protein from Ureaplasma parvum serovar 3 (strain ATCC 700970).